Reading from the N-terminus, the 300-residue chain is Acetylglutamate kinase (300 aa).

Residues 73-74, arginine 95, and asparagine 197 contribute to the substrate site; that span reads GG.

This sequence belongs to the acetylglutamate kinase family. ArgB subfamily.

It localises to the cytoplasm. It catalyses the reaction N-acetyl-L-glutamate + ATP = N-acetyl-L-glutamyl 5-phosphate + ADP. It participates in amino-acid biosynthesis; L-arginine biosynthesis; N(2)-acetyl-L-ornithine from L-glutamate: step 2/4. Its function is as follows. Catalyzes the ATP-dependent phosphorylation of N-acetyl-L-glutamate. In Polynucleobacter necessarius subsp. necessarius (strain STIR1), this protein is Acetylglutamate kinase.